A 252-amino-acid polypeptide reads, in one-letter code: Ubiquinone biosynthesis O-methyltransferase (252 aa).

Residues arginine 45, glycine 76, aspartate 97, and methionine 141 each coordinate S-adenosyl-L-methionine.

It belongs to the methyltransferase superfamily. UbiG/COQ3 family.

The enzyme catalyses a 3-demethylubiquinol + S-adenosyl-L-methionine = a ubiquinol + S-adenosyl-L-homocysteine + H(+). It carries out the reaction a 3-(all-trans-polyprenyl)benzene-1,2-diol + S-adenosyl-L-methionine = a 2-methoxy-6-(all-trans-polyprenyl)phenol + S-adenosyl-L-homocysteine + H(+). The protein operates within cofactor biosynthesis; ubiquinone biosynthesis. Its function is as follows. O-methyltransferase that catalyzes the 2 O-methylation steps in the ubiquinone biosynthetic pathway. This Caulobacter vibrioides (strain ATCC 19089 / CIP 103742 / CB 15) (Caulobacter crescentus) protein is Ubiquinone biosynthesis O-methyltransferase.